The following is a 527-amino-acid chain: Probable glucomannan 4-beta-mannosyltransferase 9 (527 aa).

The chain crosses the membrane as a helical span at residues A37–F59. D131 is an active-site residue. Positions 190 and 192 each coordinate substrate. D284 is a catalytic residue. 4 consecutive transmembrane segments (helical) span residues I363–I383, I399–V419, A478–G498, and F505–V525.

The protein belongs to the glycosyltransferase 2 family. Plant cellulose synthase-like A subfamily.

The protein localises to the golgi apparatus membrane. The enzyme catalyses GDP-mannose + (glucomannan)n = GDP + (glucomannan)n+1.. In terms of biological role, probable mannan synthase which consists of a 4-beta-mannosyltransferase activity on mannan using GDP-mannose. The beta-1,4-mannan product is the backbone for galactomannan synthesis by galactomannan galactosyltransferase. Galactomannan is a noncellulosic polysaccharides of plant cell wall. The polypeptide is Probable glucomannan 4-beta-mannosyltransferase 9 (Oryza sativa subsp. japonica (Rice)).